The sequence spans 639 residues: Testicular spindle-associated protein SHCBP1L (639 aa).

Disordered regions lie at residues 1-25 (MESD…EQTV) and 48-75 (VASP…ETCD). An O-acetylserine modification is found at Ser3. Phosphoserine is present on residues Ser8, Ser19, and Ser50. The span at 54–63 (VKGKAARRRL) shows a compositional bias: basic residues. Residues 285 to 312 (IAQRFKKTLEKYKNKRVELIEYQSNIKE) are a coiled coil. PbH1 repeat units lie at residues 479-500 (SGHL…CVLT), 501-523 (GASL…ELYP), 524-557 (GSIA…NMKV), and 560-582 (APKL…SILQ). An N6-acetyllysine modification is found at Lys556. N6-acetyllysine is present on Lys631.

Interacts with HSPA2; this interaction may promote the recruitment of HSPA2 to the spindle. As to expression, expressed in pachytene spermatocytes and elongating spermatids inside the seminiferous tubules. Not detected in ovary (at protein level). Testis-specific.

It localises to the cytoplasm. It is found in the cytoskeleton. The protein resides in the spindle. Testis-specific spindle-associated factor that plays a role in spermatogenesis. In association with HSPA2, participates in the maintenance of spindle integrity during meiosis in male germ cells. In Mus musculus (Mouse), this protein is Testicular spindle-associated protein SHCBP1L.